A 1132-amino-acid chain; its full sequence is Serine/threonine-protein kinase spk-1 (1132 aa).

Residues 75–95 traverse the membrane as a helical segment; it reads GGSLILTDIFPTVLFMFVVLF. Disordered regions lie at residues 240 to 388 and 419 to 481; these read NEDQ…DSDD and NKKA…KRGG. 2 stretches are compositionally biased toward acidic residues: residues 281-290 and 311-336; these read SEDEDVESQE and DEPIEEELASCHSDEDDHQNEVLGDE. Low complexity predominate over residues 362–372; it reads DSSVSSSTSST. Residues 373-388 show a composition bias toward acidic residues; sequence PDDDEDDSATSYDSDD. Residues 421–433 show a composition bias toward basic and acidic residues; sequence KAEVNANEERMDD. Low complexity predominate over residues 434 to 443; the sequence is VSVSPGRSDS. Residues 495–1044 form the Protein kinase domain; the sequence is YHVIRKLGWG…ANDALKHPFL (550 aa). ATP-binding positions include 501–509 and K524; that span reads LGWGHFSTV. The active-site Proton acceptor is D628. Residues 1066–1121 are disordered; that stretch reads QVPEALDGNQEVYRDENDSNSASERSANRSAGSDDEEEFHMDRPGPSGVINEPADV. The span at 1084-1096 shows a compositional bias: low complexity; it reads SNSASERSANRSA.

Belongs to the protein kinase superfamily. Ser/Thr protein kinase family.

It localises to the membrane. It catalyses the reaction L-seryl-[protein] + ATP = O-phospho-L-seryl-[protein] + ADP + H(+). The enzyme catalyses L-threonyl-[protein] + ATP = O-phospho-L-threonyl-[protein] + ADP + H(+). Its function is as follows. Required for embryogenesis and germline development in both adult hermaphrodites and males. SR-protein kinase (SRPK) that binds directly to and phosphorylates RS domains. The chain is Serine/threonine-protein kinase spk-1 (spk-1) from Caenorhabditis briggsae.